Here is a 175-residue protein sequence, read N- to C-terminus: Type-2 ice-structuring protein (175 aa).

A signal peptide spans 1-16; the sequence is MLAALLVCAMVALTRA. Positions 17-33 are excised as a propeptide; the sequence is ANGDTGKEAVMTGSSGK. The 128-residue stretch at 36 to 163 folds into the C-type lectin domain; the sequence is TECPTDWKMF…LHASVCAKPA (128 aa). 5 disulfides stabilise this stretch: cysteine 38-cysteine 49, cysteine 66-cysteine 159, cysteine 103-cysteine 134, cysteine 123-cysteine 145, and cysteine 135-cysteine 151.

The protein resides in the secreted. Functionally, antifreeze proteins lower the blood freezing point. The sequence is that of Type-2 ice-structuring protein from Osmerus mordax (Rainbow smelt).